Reading from the N-terminus, the 211-residue chain is Peptidyl-prolyl cis-trans isomerase FKBP14 (211 aa).

The first 19 residues, 1-19 (MRFFLWNAILALWVTVLSG), serve as a signal peptide directing secretion. A disulfide bridge links Cys38 with Cys96. The 91-residue stretch at 45 to 135 (GDLMLVHYEG…IFNIDLLEIR (91 aa)) folds into the PPIase FKBP-type domain. Residues 135–170 (RNGPRSHESFQEMDLNDDWRLSKHEVKVYLQKEFEK) enclose the EF-hand 1 domain. Residues Asp148, Asn150, Asp152, Arg154, and Glu159 each coordinate Ca(2+). N-linked (GlcNAc...) asparagine glycosylation occurs at Asn176. Residues 179-211 (HHDALVEDIFDKEDEDKDGFISAREFTYVHDEL) form the EF-hand 2 domain. Asp192, Asp194, Asp196, and Glu203 together coordinate Ca(2+). The Prevents secretion from ER signature appears at 208–211 (HDEL).

In terms of assembly, monomer. Homodimer. Interacts with type III, type IV and type X collagens.

The protein resides in the endoplasmic reticulum lumen. The catalysed reaction is [protein]-peptidylproline (omega=180) = [protein]-peptidylproline (omega=0). With respect to regulation, inhibited by tacrolimus/FK506. Functionally, PPIase which accelerates the folding of proteins during protein synthesis. Has a preference for substrates containing 4-hydroxylproline modifications, including type III collagen. May also target type VI and type X collagens. The polypeptide is Peptidyl-prolyl cis-trans isomerase FKBP14 (Fkbp14) (Mus musculus (Mouse)).